The chain runs to 119 residues: Ribonuclease P protein component (119 aa).

This sequence belongs to the RnpA family. As to quaternary structure, consists of a catalytic RNA component (M1 or rnpB) and a protein subunit.

The enzyme catalyses Endonucleolytic cleavage of RNA, removing 5'-extranucleotides from tRNA precursor.. Functionally, RNaseP catalyzes the removal of the 5'-leader sequence from pre-tRNA to produce the mature 5'-terminus. It can also cleave other RNA substrates such as 4.5S RNA. The protein component plays an auxiliary but essential role in vivo by binding to the 5'-leader sequence and broadening the substrate specificity of the ribozyme. The chain is Ribonuclease P protein component from Nitrosomonas europaea (strain ATCC 19718 / CIP 103999 / KCTC 2705 / NBRC 14298).